The sequence spans 102 residues: Spexin prohormone 1 (102 aa).

Positions 1-26 are cleaved as a signal peptide; it reads MKDLRTLAAYALALLLLATFVSYSRS. A propeptide spanning residues 27–35 is cleaved from the precursor; it reads APMGSFQRR. At Gln-49 the chain carries Glutamine amide. Residues 50–102 constitute a propeptide that is removed on maturation; sequence GRRFVSEDRNEGDLYDTIRLESQSQNTENLSISKAAAFLLNVLQQARDEGEPY.

The protein belongs to the spexin family. Expressed in the anterior hypothalamus, ventromedial thalamic nucleus and medial longitudinal fasciculus of the brain (at protein level). Widely expressed. Expressed predominantly in the spleen, kidney, liver and testis. Expressed in olfactory bulb, pituitary, telencephalon, diencephalons, spinal cord, optic tectum, cerebellum and hypothalamus of the brain.

The protein localises to the secreted. Its subcellular location is the extracellular space. It localises to the cytoplasmic vesicle. It is found in the secretory vesicle. In terms of biological role, plays a role in the regulation of food intake and body weight and in reproduction. May also play a role as a central modulator of cardiovascular and renal function and nociception. Its function is as follows. Brain administration of the peptide inhibits food consumption. May function as a satiety factor for feeding control. Involved in the negative regulation of the reproductive axis by inhibiting luteinizing hormone secretion from pituitary cells. This Carassius auratus (Goldfish) protein is Spexin prohormone 1 (spx).